Here is a 101-residue protein sequence, read N- to C-terminus: Urease subunit beta 1 (101 aa).

This sequence belongs to the urease beta subunit family. As to quaternary structure, heterotrimer of UreA (gamma), UreB (beta) and UreC (alpha) subunits. Three heterotrimers associate to form the active enzyme.

The protein localises to the cytoplasm. The enzyme catalyses urea + 2 H2O + H(+) = hydrogencarbonate + 2 NH4(+). It participates in nitrogen metabolism; urea degradation; CO(2) and NH(3) from urea (urease route): step 1/1. In terms of biological role, disruption of the ure1 gene cluster suggests that it protects brucellae during their passage through the stomach. The major route of infection in human brucellosis is oral. The chain is Urease subunit beta 1 from Brucella abortus (strain 2308).